The following is a 700-amino-acid chain: Calpain-2 catalytic subunit (700 aa).

Residues 2-19 constitute a propeptide, anchors to the small subunit; it reads AGMAAALAKERAAAAGAG. Residues 45 to 344 enclose the Calpain catalytic domain; sequence LFHDPSFPAG…YSRLEICNLT (300 aa). Residues glycine 91 and aspartate 96 each coordinate Ca(2+). Cysteine 105 is an active-site residue. Positions 175, 229, and 230 each coordinate Ca(2+). Catalysis depends on residues histidine 262 and asparagine 286. 3 residues coordinate Ca(2+): glutamate 292, aspartate 299, and glutamate 323. Positions 345–514 are domain III; the sequence is PDTLASDRYK…KNANSTVIDD (170 aa). The segment at 515–529 is linker; the sequence is EIEANFEETEIDEDD. The domain IV stretch occupies residues 530–700; that stretch reads IEPSFKKLFG…LINWLFFTVI (171 aa). Positions 542, 545, 547, 552, 585, 587, 589, 591, 596, 615, 617, 619, 621, 626, 658, and 661 each coordinate Ca(2+). EF-hand domains lie at 572 to 605 and 602 to 637; these read FSIE…TKIQ and TKIQ…AGFK. The region spanning 667–700 is the EF-hand 3 domain; it reads IRLETLYKMFRKLDTEKTGTIELNLINWLFFTVI.

This sequence belongs to the peptidase C2 family. As to quaternary structure, forms a heterodimer with a small (regulatory) subunit (CAPNS1). Requires Ca(2+) as cofactor. As to expression, ubiquitous.

The protein resides in the cytoplasm. The protein localises to the cell membrane. The catalysed reaction is Broad endopeptidase specificity.. Activated by 200-1000 micromolar concentrations of calcium and inhibited by calpastatin. Calcium-regulated non-lysosomal thiol-protease which catalyze limited proteolysis of substrates involved in cytoskeletal remodeling and signal transduction. This Gallus gallus (Chicken) protein is Calpain-2 catalytic subunit (CAPN2).